Consider the following 272-residue polypeptide: NADPH-dependent 7-cyano-7-deazaguanine reductase (272 aa).

82–84 (IES) contacts substrate. Position 84–85 (84–85 (SK)) interacts with NADPH. The active-site Thioimide intermediate is the Cys-178. The active-site Proton donor is Asp-185. Residue 217–218 (HE) coordinates substrate. 246–247 (RG) is an NADPH binding site.

This sequence belongs to the GTP cyclohydrolase I family. QueF type 2 subfamily. As to quaternary structure, homodimer.

The protein localises to the cytoplasm. The enzyme catalyses 7-aminomethyl-7-carbaguanine + 2 NADP(+) = 7-cyano-7-deazaguanine + 2 NADPH + 3 H(+). It participates in tRNA modification; tRNA-queuosine biosynthesis. Its function is as follows. Catalyzes the NADPH-dependent reduction of 7-cyano-7-deazaguanine (preQ0) to 7-aminomethyl-7-deazaguanine (preQ1). The chain is NADPH-dependent 7-cyano-7-deazaguanine reductase from Stenotrophomonas maltophilia (strain R551-3).